The primary structure comprises 281 residues: Phosphonates import ATP-binding protein PhnC (281 aa).

Residues 2–245 enclose the ABC transporter domain; sequence FELKDVTRRF…AVKEIYGTDK (244 aa). 34–41 lines the ATP pocket; the sequence is GRSGAGKS.

Belongs to the ABC transporter superfamily. Phosphonates importer (TC 3.A.1.9.1) family. The complex is composed of two ATP-binding proteins (PhnC), two transmembrane proteins (PhnE) and a solute-binding protein (PhnD).

The protein localises to the cell inner membrane. It carries out the reaction phosphonate(out) + ATP + H2O = phosphonate(in) + ADP + phosphate + H(+). Functionally, part of the ABC transporter complex PhnCDE involved in phosphonates import. Responsible for energy coupling to the transport system. The sequence is that of Phosphonates import ATP-binding protein PhnC from Rhizobium etli (strain ATCC 51251 / DSM 11541 / JCM 21823 / NBRC 15573 / CFN 42).